We begin with the raw amino-acid sequence, 1013 residues long: Sodium/potassium-transporting ATPase subunit alpha-3 (1013 aa).

Basic and acidic residues predominate over residues 1 to 10; the sequence is MGDKKDDKSS. The tract at residues 1–24 is disordered; it reads MGDKKDDKSSPKKSKAKERRDLDD. The Cytoplasmic portion of the chain corresponds to 1–77; it reads MGDKKDDKSS…NALTPPPTTP (77 aa). A phosphoserine mark is found at serine 37 and serine 56. An interaction with phosphoinositide-3 kinase region spans residues 72 to 74; sequence PPP. Residues 78-98 traverse the membrane as a helical segment; the sequence is EWVKFCRQLFGGFSILLWIGA. The Extracellular portion of the chain corresponds to 99 to 121; it reads ILCFLAYGIQAGTEDDPSGDNLY. A helical membrane pass occupies residues 122–142; the sequence is LGIVLAAVVIITGCFSYYQEA. Residues 143–278 are Cytoplasmic-facing; sequence KSSKIMESFK…VGKTPIAIEI (136 aa). Phosphoserine is present on residues serine 218 and serine 265. The chain crosses the membrane as a helical span at residues 279-298; the sequence is EHFIQLITGVAVFLGVSFFI. The Extracellular portion of the chain corresponds to 299-310; the sequence is LSLILGYTWLEA. The helical transmembrane segment at 311-328 threads the bilayer; that stretch reads VIFLIGIIVANVPEGLLA. The Cytoplasmic segment spans residues 329–762; sequence TVTVCLTLTA…EEGRLIFDNL (434 aa). Aspartate 366 acts as the 4-aspartylphosphate intermediate in catalysis. A Phosphoserine modification is found at serine 442. Tyrosine 548 bears the Phosphotyrosine mark. Residues aspartate 707 and aspartate 711 each coordinate Mg(2+). A helical membrane pass occupies residues 763 to 782; sequence KKSIAYTLTSNIPEITPFLL. Topologically, residues 783-792 are extracellular; it reads FIMANIPLPL. Residues 793-813 traverse the membrane as a helical segment; the sequence is GTITILCIDLGTDMVPAISLA. At 814–833 the chain is on the cytoplasmic side; the sequence is YEAAESDIMKRQPRNPRTDK. The chain crosses the membrane as a helical span at residues 834-856; the sequence is LVNERLISMAYGQIGMIQALGGF. At 857–908 the chain is on the extracellular side; it reads FSYFVILAENGFLPGNLVGIRLNWDDRTVNDLEDSYGQQWTYEQRKVVEFTC. A helical transmembrane segment spans residues 909-928; the sequence is HTAFFVSIVVVQWADLIICK. Topologically, residues 929 to 941 are cytoplasmic; that stretch reads TRRNSVFQQGMKN. Serine 933 is modified (phosphoserine; by PKA). A helical membrane pass occupies residues 942-960; that stretch reads KILIFGLFEETALAAFLSY. Topologically, residues 961 to 975 are extracellular; sequence CPGMDVALRMYPLKP. The chain crosses the membrane as a helical span at residues 976–996; sequence SWWFCAFPYSFLIFVYDEIRK. At 997–1013 the chain is on the cytoplasmic side; that stretch reads LILRRNPGGWVEKETYY.

The protein belongs to the cation transport ATPase (P-type) (TC 3.A.3) family. Type IIC subfamily. In terms of assembly, the sodium/potassium-transporting ATPase is composed of a catalytic alpha subunit, an auxiliary non-catalytic beta subunit and an additional regulatory subunit. Interacts with regulatory subunit FXYD1.

Its subcellular location is the cell membrane. It carries out the reaction K(+)(out) + Na(+)(in) + ATP + H2O = K(+)(in) + Na(+)(out) + ADP + phosphate + H(+). This is the catalytic component of the active enzyme, which catalyzes the hydrolysis of ATP coupled with the exchange of sodium and potassium ions across the plasma membrane. This action creates the electrochemical gradient of sodium and potassium ions, providing the energy for active transport of various nutrients. This chain is Sodium/potassium-transporting ATPase subunit alpha-3 (Atp1a3), found in Mus musculus (Mouse).